A 156-amino-acid chain; its full sequence is Endoribonuclease YbeY (156 aa).

H117, H121, and H127 together coordinate Zn(2+).

This sequence belongs to the endoribonuclease YbeY family. Zn(2+) is required as a cofactor.

It localises to the cytoplasm. Its function is as follows. Single strand-specific metallo-endoribonuclease involved in late-stage 70S ribosome quality control and in maturation of the 3' terminus of the 16S rRNA. In Shewanella piezotolerans (strain WP3 / JCM 13877), this protein is Endoribonuclease YbeY.